The chain runs to 284 residues: D-tagatose-1,6-bisphosphate aldolase subunit GatY (284 aa).

The Proton donor role is filled by Asp82. The Zn(2+) site is built by His83 and His180. Gly181 serves as a coordination point for dihydroxyacetone phosphate. His208 serves as a coordination point for Zn(2+). Residues 209–211 and 230–233 each bind dihydroxyacetone phosphate; these read GAS and NVAT.

Belongs to the class II fructose-bisphosphate aldolase family. TagBP aldolase GatY subfamily. In terms of assembly, forms a complex with GatZ. Requires Zn(2+) as cofactor.

The catalysed reaction is D-tagatofuranose 1,6-bisphosphate = D-glyceraldehyde 3-phosphate + dihydroxyacetone phosphate. It functions in the pathway carbohydrate metabolism; D-tagatose 6-phosphate degradation; D-glyceraldehyde 3-phosphate and glycerone phosphate from D-tagatose 6-phosphate: step 2/2. Functionally, catalytic subunit of the tagatose-1,6-bisphosphate aldolase GatYZ, which catalyzes the reversible aldol condensation of dihydroxyacetone phosphate (DHAP or glycerone-phosphate) with glyceraldehyde 3-phosphate (G3P) to produce tagatose 1,6-bisphosphate (TBP). Requires GatZ subunit for full activity and stability. Is involved in the catabolism of galactitol. This chain is D-tagatose-1,6-bisphosphate aldolase subunit GatY, found in Escherichia coli (strain 55989 / EAEC).